A 185-amino-acid polypeptide reads, in one-letter code: Elongation factor P (185 aa).

The protein belongs to the elongation factor P family.

The protein localises to the cytoplasm. It participates in protein biosynthesis; polypeptide chain elongation. Functionally, involved in peptide bond synthesis. Stimulates efficient translation and peptide-bond synthesis on native or reconstituted 70S ribosomes in vitro. Probably functions indirectly by altering the affinity of the ribosome for aminoacyl-tRNA, thus increasing their reactivity as acceptors for peptidyl transferase. This chain is Elongation factor P, found in Lactococcus lactis subsp. cremoris (strain MG1363).